The following is a 389-amino-acid chain: Sulfate adenylyltransferase (389 aa).

This sequence belongs to the sulfate adenylyltransferase family.

It catalyses the reaction sulfate + ATP + H(+) = adenosine 5'-phosphosulfate + diphosphate. Its pathway is sulfur metabolism; hydrogen sulfide biosynthesis; sulfite from sulfate: step 1/3. This chain is Sulfate adenylyltransferase, found in Deinococcus geothermalis (strain DSM 11300 / CIP 105573 / AG-3a).